The sequence spans 547 residues: MSMFCYQCQEASQGIGCTVRGVCGKTDDVANLQDLLIFTLKGISFLNLKARETGVNKEKTDRFLFEGLFSTITNVNFDRNFFINKIKEAVALREEIKEDLKKAGIEVDESCEAIHWVYDTDEDIEAIAAEVGVLSTKDEDIRSLRELITYGVKGMAAYAYHAYQLGYKDDNIFRFMEKALAKVLDDSLTADDYVALALEAGKYGVDTMALLDKANTSTYGHPEITKVNIGVRNNPGILISGHDLKDLEQLLEQTAGTGVDVYTHGEMLPAHYYPAFKKYPHFVGNYGNAWWQQDREFELFNGPILMTTNCLVPPKDSYKDRVYTTGVVGFEGVKYIPEGPDGKKDFSEIIEHAKRCKPPVEIERGEIIGGFAHNQVLELADKIVEAVKTGAIKRFFVMAGCDGRMKSRTYYTEFAKALPKDTVILTAGCAKYRYNKLNLGDINGIPRVLDAGQCNDSYSLAVIAMKLKEVFGLNDINKLPISYNIAWYEQKAVIVLLALLYLGVKNIHLGPTLPAFLSPNVTKVLVDKFGIGGITNVEDDMKMFMGE.

[4Fe-4S] cluster contacts are provided by C5, C8, C17, and C23. Hybrid [4Fe-2O-2S] cluster-binding residues include H242, E266, C310, C401, C429, C454, E489, and K491. Residue C401 is modified to Cysteine persulfide.

Belongs to the HCP family. [4Fe-4S] cluster is required as a cofactor. The cofactor is hybrid [4Fe-2O-2S] cluster.

The protein resides in the cytoplasm. It carries out the reaction A + NH4(+) + H2O = hydroxylamine + AH2 + H(+). Catalyzes the reduction of hydroxylamine to form NH(3) and H(2)O. The polypeptide is Hydroxylamine reductase (Thermoanaerobacter pseudethanolicus (strain ATCC 33223 / 39E) (Clostridium thermohydrosulfuricum)).